The sequence spans 553 residues: Putative transport protein KPK_0013 (553 aa).

Transmembrane regions (helical) follow at residues 4-24 (IALT…IGNV), 28-48 (GVGF…HFVD), 65-85 (FGLI…FFAS), 95-115 (LFAI…HKLF), and 158-178 (MSYA…MWLV). 2 consecutive RCK C-terminal domains span residues 192–276 (RFEE…VIGQ) and 279–361 (ATSL…ELGN). 6 helical membrane passes run 371-391 (MLPV…PLFI), 403-425 (AGGP…LYWF), 437-457 (LGIV…FVAT), 464-484 (LSWI…VGIL), 493-513 (YLTL…LAFA), and 532-552 (PLVM…FWGL).

The protein belongs to the AAE transporter (TC 2.A.81) family. YidE subfamily.

The protein localises to the cell membrane. The chain is Putative transport protein KPK_0013 from Klebsiella pneumoniae (strain 342).